The sequence spans 321 residues: Tyrosine recombinase XerC (321 aa).

A Core-binding (CB) domain is found at 16 to 107 (PSIAQEMTRW…GLRSFGRFLE (92 aa)). The 188-residue stretch at 128 to 315 (SLPKPLPMAS…DSERLLEVYA (188 aa)) folds into the Tyr recombinase domain. Residues Arg173, Lys199, His267, Arg270, and His293 contribute to the active site. The active-site O-(3'-phospho-DNA)-tyrosine intermediate is Tyr302.

This sequence belongs to the 'phage' integrase family. XerC subfamily. Forms a cyclic heterotetrameric complex composed of two molecules of XerC and two molecules of XerD.

It is found in the cytoplasm. Site-specific tyrosine recombinase, which acts by catalyzing the cutting and rejoining of the recombining DNA molecules. The XerC-XerD complex is essential to convert dimers of the bacterial chromosome into monomers to permit their segregation at cell division. It also contributes to the segregational stability of plasmids. The polypeptide is Tyrosine recombinase XerC (Bradyrhizobium diazoefficiens (strain JCM 10833 / BCRC 13528 / IAM 13628 / NBRC 14792 / USDA 110)).